The sequence spans 389 residues: MPEGPELHLASHFVNETCKGLVFGGCVEKSSVSRNPEVPFESSAYHISALARGKELRLTLSPLPGSQPPQKPLSLVFRFGMSGSFQLVPAEALPRHAHLRFYTAPPAPRLALCFVDIRRFGHWDPGGEWQPGRGPCVLLEYERFRENVLRNLSDKAFDRPICEALLDQRFFNGIGNYLRAEILYRLKIPPFEKARTVLEALQQCRPSPELTLSQKIKAKLQNPDLLELCHLVPKEVVQLGGKGYGPERGEEDFAAFRAWLRCYGVPGMSSLRDRHGRTIWFQGDPGPLAPKGGRSQKKKSQETQLGAEDRKEDLPLSSKSVSRMRRARKHPPKRIAQQSEGAGLQQNQETPTAPEKGKRRGQRASTGHRRRPKTIPDTRPREAGESSAS.

The active-site Schiff-base intermediate with DNA is Pro2. The active-site Proton donor is Glu3. Lys54 functions as the Proton donor; for beta-elimination activity in the catalytic mechanism. DNA is bound at residue Asn176. The segment at 278–389 is disordered; it reads TIWFQGDPGP…PREAGESSAS (112 aa). The span at 322–333 shows a compositional bias: basic residues; sequence SRMRRARKHPPK. The span at 336-351 shows a compositional bias: polar residues; the sequence is AQQSEGAGLQQNQETP. Positions 357-373 are enriched in basic residues; that stretch reads GKRRGQRASTGHRRRPK. The span at 374-389 shows a compositional bias: basic and acidic residues; sequence TIPDTRPREAGESSAS.

This sequence belongs to the FPG family. As to expression, detected in heart, spleen and lung.

Its subcellular location is the cytoplasm. The protein localises to the cytoskeleton. It localises to the microtubule organizing center. It is found in the centrosome. The protein resides in the nucleus. Its subcellular location is the chromosome. The enzyme catalyses 2'-deoxyribonucleotide-(2'-deoxyribose 5'-phosphate)-2'-deoxyribonucleotide-DNA = a 3'-end 2'-deoxyribonucleotide-(2,3-dehydro-2,3-deoxyribose 5'-phosphate)-DNA + a 5'-end 5'-phospho-2'-deoxyribonucleoside-DNA + H(+). Involved in base excision repair of DNA damaged by oxidation or by mutagenic agents. Acts as a DNA glycosylase that recognizes and removes damaged bases. Has a preference for oxidized pyrimidines, such as thymine glycol, formamidopyrimidine (Fapy) and 5-hydroxyuracil. Has marginal activity towards 8-oxoguanine. Has AP (apurinic/apyrimidinic) lyase activity and introduces nicks in the DNA strand. Cleaves the DNA backbone by beta-delta elimination to generate a single-strand break at the site of the removed base with both 3'- and 5'-phosphates. Has DNA glycosylase/lyase activity towards mismatched uracil and thymine, in particular in U:C and T:C mismatches. Specifically binds 5-hydroxymethylcytosine (5hmC), suggesting that it acts as a specific reader of 5hmC. This chain is Endonuclease 8-like 1 (Neil1), found in Mus musculus (Mouse).